The primary structure comprises 1005 residues: Ephrin type-A receptor 5 (1005 aa).

The segment at 1–24 is disordered; the sequence is MRGSGPRGAGRRRTQGRGGGGDTP. An N-terminal signal peptide occupies residues 1 to 26; that stretch reads MRGSGPRGAGRRRTQGRGGGGDTPRV. Topologically, residues 27–575 are extracellular; that stretch reads PASLAGCYSA…GASNDQSQIP (549 aa). In terms of domain architecture, Eph LBD spans 62-240; the sequence is EVNLLDSRTV…YYKKCPSVVR (179 aa). N-linked (GlcNAc...) asparagine glycosylation is found at Asn266, Asn301, Asn371, Asn425, Asn438, and Asn463. 2 consecutive Fibronectin type-III domains span residues 359 to 469 and 470 to 564; these read PPSA…TNQA and APSP…TTPV. The chain crosses the membrane as a helical span at residues 576 to 596; the sequence is IIGVSVTVGVILLAVMIGFLL. Residues 597-1005 lie on the Cytoplasmic side of the membrane; sequence SGSCCECGCG…MDAVAQVTLE (409 aa). Phosphotyrosine; by autocatalysis is present on residues Tyr652 and Tyr658. The Protein kinase domain occupies 677–938; that stretch reads ITIERVIGAG…DIVNMLDKLI (262 aa). Residues 683 to 691 and Lys709 each bind ATP; that span reads IGAGEFGEV. Asp802 (proton acceptor) is an active-site residue. Phosphotyrosine; by autocatalysis is present on residues Tyr835 and Tyr984. An SAM domain is found at 967–1005; the sequence is GAYRSVGEWLEATKMGRYTEIFMENGYSSMDAVAQVTLE.

It belongs to the protein kinase superfamily. Tyr protein kinase family. Ephrin receptor subfamily. In terms of assembly, heterotetramer upon binding of the ligand. The heterotetramer is composed of an ephrin dimer and a receptor dimer. Oligomerization is probably required to induce biological responses. Interacts (via SAM domain) with SAMD5 (via SAM domain). Post-translationally, phosphorylated. Phosphorylation is stimulated by the ligand EFNA5. Dephosphorylation upon stimulation by glucose, inhibits EPHA5 forward signaling and results in insulin secretion. In terms of tissue distribution, almost exclusively expressed in the nervous system. Predominantly expressed in neurons.

It is found in the cell membrane. The protein resides in the cell projection. It localises to the axon. The protein localises to the dendrite. The catalysed reaction is L-tyrosyl-[protein] + ATP = O-phospho-L-tyrosyl-[protein] + ADP + H(+). Receptor tyrosine kinase which binds promiscuously GPI-anchored ephrin-A family ligands residing on adjacent cells, leading to contact-dependent bidirectional signaling into neighboring cells. The signaling pathway downstream of the receptor is referred to as forward signaling while the signaling pathway downstream of the ephrin ligand is referred to as reverse signaling. Among GPI-anchored ephrin-A ligands, EFNA5 most probably constitutes the cognate/functional ligand for EPHA5. Functions as an axon guidance molecule during development and may be involved in the development of the retinotectal, entorhino-hippocampal and hippocamposeptal pathways. Together with EFNA5 plays also a role in synaptic plasticity in adult brain through regulation of synaptogenesis. In addition to its function in the nervous system, the interaction of EPHA5 with EFNA5 mediates communication between pancreatic islet cells to regulate glucose-stimulated insulin secretion. The polypeptide is Ephrin type-A receptor 5 (Epha5) (Rattus norvegicus (Rat)).